A 147-amino-acid chain; its full sequence is Prefoldin subunit alpha (147 aa).

The protein belongs to the prefoldin alpha subunit family. Heterohexamer of two alpha and four beta subunits.

Its subcellular location is the cytoplasm. In terms of biological role, molecular chaperone capable of stabilizing a range of proteins. Seems to fulfill an ATP-independent, HSP70-like function in archaeal de novo protein folding. The chain is Prefoldin subunit alpha from Thermococcus onnurineus (strain NA1).